We begin with the raw amino-acid sequence, 90 residues long: MAFFGKRKEKRKFTQQNPLFKRRKFCRFTAAGVEEIDYKDLDTLRDFVQENGKIIPARLTGTRAIYQRQLDTAIKRARFLALLPYTDNHK.

Belongs to the bacterial ribosomal protein bS18 family. In terms of assembly, part of the 30S ribosomal subunit. Forms a tight heterodimer with protein bS6.

Functionally, binds as a heterodimer with protein bS6 to the central domain of the 16S rRNA, where it helps stabilize the platform of the 30S subunit. In Bordetella bronchiseptica (strain ATCC BAA-588 / NCTC 13252 / RB50) (Alcaligenes bronchisepticus), this protein is Small ribosomal subunit protein bS18.